The sequence spans 193 residues: Recombination protein RecR (193 aa).

A C4-type zinc finger spans residues 61 to 76 (CASCNALSESEICEIC). The Toprim domain maps to 84–170 (SQLCMVLHPR…TFTKIAQGVP (87 aa)).

Belongs to the RecR family.

Its function is as follows. May play a role in DNA repair. It seems to be involved in an RecBC-independent recombinational process of DNA repair. It may act with RecF and RecO. This is Recombination protein RecR from Helicobacter pylori (strain Shi470).